A 365-amino-acid polypeptide reads, in one-letter code: Cyclin-O protein B (365 aa).

The interval 22–64 (SGKRKRDSVYSPGDATPGDRGEGEPKCPSVGTKKRAKYSRHRK) is disordered. A compositionally biased stretch (basic residues) spans 53–64 (TKKRAKYSRHRK).

This sequence belongs to the cyclin family.

The protein resides in the cytoplasm. Functionally, specifically required for generation of multiciliated cells, possibly by promoting a cell cycle state compatible with centriole amplification and maturation. Acts downstream of mcidas to promote mother centriole amplification and maturation in preparation for apical docking. This is Cyclin-O protein B (ccno-b) from Xenopus laevis (African clawed frog).